A 390-amino-acid chain; its full sequence is Flagellar P-ring protein (390 aa).

The first 36 residues, 1–36 (MFFSRKIRSLLLTPKRRWSLILTLCLIFTGINFSTS), serve as a signal peptide directing secretion.

It belongs to the FlgI family. In terms of assembly, the basal body constitutes a major portion of the flagellar organelle and consists of four rings (L,P,S, and M) mounted on a central rod.

The protein resides in the periplasm. It localises to the bacterial flagellum basal body. Its function is as follows. Assembles around the rod to form the L-ring and probably protects the motor/basal body from shearing forces during rotation. The chain is Flagellar P-ring protein from Desulfotalea psychrophila (strain LSv54 / DSM 12343).